The primary structure comprises 88 residues: Phosphocarrier protein HPr (88 aa).

Residues 1–88 (MASKEFHIVA…ETMTKEGLAE (88 aa)) form the HPr domain. The active-site Pros-phosphohistidine intermediate is His-15. Ser-46 carries the phosphoserine; by HPrK/P modification.

This sequence belongs to the HPr family.

Its subcellular location is the cytoplasm. Its activity is regulated as follows. Phosphorylation on Ser-46 inhibits the phosphoryl transfer from enzyme I to HPr. Functionally, general (non sugar-specific) component of the phosphoenolpyruvate-dependent sugar phosphotransferase system (sugar PTS). This major carbohydrate active-transport system catalyzes the phosphorylation of incoming sugar substrates concomitantly with their translocation across the cell membrane. The phosphoryl group from phosphoenolpyruvate (PEP) is transferred to the phosphoryl carrier protein HPr by enzyme I. Phospho-HPr then transfers it to the PTS EIIA domain. In terms of biological role, P-Ser-HPr interacts with the catabolite control protein A (CcpA), forming a complex that binds to DNA at the catabolite response elements cre, operator sites preceding a large number of catabolite-regulated genes. Thus, P-Ser-HPr is a corepressor in carbon catabolite repression (CCR), a mechanism that allows bacteria to coordinate and optimize the utilization of available carbon sources. P-Ser-HPr also plays a role in inducer exclusion, in which it probably interacts with several non-PTS permeases and inhibits their transport activity. The sequence is that of Phosphocarrier protein HPr (ptsH) from Lactococcus lactis subsp. cremoris (Streptococcus cremoris).